Here is a 123-residue protein sequence, read N- to C-terminus: Small ribosomal subunit protein uS12 (123 aa).

3-methylthioaspartic acid is present on aspartate 89. Residues 100–123 (GSLDTSGVKGRNQGRSKYGTKKPK) form a disordered region. A compositionally biased stretch (basic residues) spans 111 to 123 (NQGRSKYGTKKPK).

This sequence belongs to the universal ribosomal protein uS12 family. As to quaternary structure, part of the 30S ribosomal subunit. Contacts proteins S8 and S17. May interact with IF1 in the 30S initiation complex.

Functionally, with S4 and S5 plays an important role in translational accuracy. In terms of biological role, interacts with and stabilizes bases of the 16S rRNA that are involved in tRNA selection in the A site and with the mRNA backbone. Located at the interface of the 30S and 50S subunits, it traverses the body of the 30S subunit contacting proteins on the other side and probably holding the rRNA structure together. The combined cluster of proteins S8, S12 and S17 appears to hold together the shoulder and platform of the 30S subunit. The chain is Small ribosomal subunit protein uS12 from Pseudomonas syringae pv. syringae (strain B728a).